Here is a 149-residue protein sequence, read N- to C-terminus: Calmodulin (149 aa).

At alanine 2 the chain carries N-acetylalanine. 4 consecutive EF-hand domains span residues 8 to 43 (EQIAEFKEAFSLFDKDGDGTITTKELGTVMRSLGQN), 44 to 79 (PTEAELQDMINEVDADGDGTIDFPEFLTMMARKMKD), 81 to 116 (DSEEEIREAFRVFDKDGNGFISAAELRHVMTNLGEK), and 117 to 149 (LTDEEVDEMIREADIDGDGQVNYEEFVTMMTSK). Ca(2+) is bound by residues aspartate 21, aspartate 23, aspartate 25, threonine 27, glutamate 32, aspartate 57, aspartate 59, aspartate 61, threonine 63, glutamate 68, aspartate 94, aspartate 96, asparagine 98, and glutamate 105. N6,N6,N6-trimethyllysine is present on lysine 116. Aspartate 130, aspartate 132, aspartate 134, glutamine 136, and glutamate 141 together coordinate Ca(2+).

It belongs to the calmodulin family.

In terms of biological role, calmodulin mediates the control of a large number of enzymes, ion channels and other proteins by Ca(2+). Among the enzymes to be stimulated by the calmodulin-Ca(2+) complex are a number of protein kinases and phosphatases. In Pyuridae sp. (Sea squirt), this protein is Calmodulin.